The sequence spans 406 residues: DAZ-associated protein 1 (406 aa).

The residue at position 1 (M1) is an N-acetylmethionine. RRM domains are found at residues G10–P97 and N113–P190. Positions T74–V117 are disordered. The span at Q91–K111 shows a compositional bias: basic and acidic residues. K150 is subject to N6-acetyllysine. A disordered region spans residues K186–R406. Over residues N195–G207 the composition is skewed to polar residues. The segment covering G247 to F262 has biased composition (pro residues). R253 carries the omega-N-methylarginine modification. The segment covering F280–Y294 has biased composition (low complexity). Positions G295–T315 are enriched in pro residues. The segment covering S363–P378 has biased composition (low complexity). The span at G379–R392 shows a compositional bias: gly residues.

Interacts with DAZ and DAZL. In terms of processing, acetylation at Lys-150 is predominantly observed in the nuclear fraction, and may regulate nucleocytoplasmic transport. As to expression, mainly expressed in testis. Expressed at much lower level in liver, heart and brain. Also expressed in ovary. Expressed throughout testes development, in both the prenatal and postnatal periods.

It is found in the cytoplasm. The protein localises to the nucleus. Its function is as follows. RNA-binding protein, which may be required during spermatogenesis. This is DAZ-associated protein 1 (Dazap1) from Mus musculus (Mouse).